A 194-amino-acid polypeptide reads, in one-letter code: PRELI domain containing protein 3B (194 aa).

A PRELI/MSF1 domain is found at 1 to 172 (MKIWTSEHVF…VIHKLNAEIE (172 aa)). Residues Ser46 and Ser51 each carry the phosphoserine modification.

Belongs to the slowmo family.

The sequence is that of PRELI domain containing protein 3B (PRELID3B) from Macaca fascicularis (Crab-eating macaque).